Consider the following 88-residue polypeptide: MKLFGKEQQNSKTMAKERLRLVLVQDRTNVSPELLQNLKEDLIAVITKYMEIDEKALEVNIDSHEDQVALIANIPIKNVKRSVRVQTN.

This sequence belongs to the MinE family.

Functionally, prevents the cell division inhibition by proteins MinC and MinD at internal division sites while permitting inhibition at polar sites. This ensures cell division at the proper site by restricting the formation of a division septum at the midpoint of the long axis of the cell. This Carboxydothermus hydrogenoformans (strain ATCC BAA-161 / DSM 6008 / Z-2901) protein is Cell division topological specificity factor.